A 315-amino-acid chain; its full sequence is 4-diphosphocytidyl-2-C-methyl-D-erythritol kinase (315 aa).

Residue Lys8 is part of the active site. An ATP-binding site is contributed by 93 to 103 (PVAAGLAGGSS). Asp135 is an active-site residue.

It belongs to the GHMP kinase family. IspE subfamily.

It carries out the reaction 4-CDP-2-C-methyl-D-erythritol + ATP = 4-CDP-2-C-methyl-D-erythritol 2-phosphate + ADP + H(+). It participates in isoprenoid biosynthesis; isopentenyl diphosphate biosynthesis via DXP pathway; isopentenyl diphosphate from 1-deoxy-D-xylulose 5-phosphate: step 3/6. Functionally, catalyzes the phosphorylation of the position 2 hydroxy group of 4-diphosphocytidyl-2C-methyl-D-erythritol. The polypeptide is 4-diphosphocytidyl-2-C-methyl-D-erythritol kinase (Heliobacterium modesticaldum (strain ATCC 51547 / Ice1)).